We begin with the raw amino-acid sequence, 116 residues long: Iron-sulfur cluster insertion protein ErpA (116 aa).

3 residues coordinate iron-sulfur cluster: Cys44, Cys108, and Cys110.

The protein belongs to the HesB/IscA family. As to quaternary structure, homodimer. Iron-sulfur cluster serves as cofactor.

Its function is as follows. Required for insertion of 4Fe-4S clusters for at least IspG. The sequence is that of Iron-sulfur cluster insertion protein ErpA from Shewanella denitrificans (strain OS217 / ATCC BAA-1090 / DSM 15013).